Reading from the N-terminus, the 297-residue chain is CASP-like protein 4A2 (297 aa).

Residues 1-20 (MKMKRTASSNSEAQSYNESP) are compositionally biased toward polar residues. Residues 1-135 (MKMKRTASSN…PINGEESTRT (135 aa)) are disordered. Over 1 to 149 (MKMKRTASSN…ARGDDLVSLT (149 aa)) the chain is Cytoplasmic. The segment covering 69–83 (LPSPIPPPPPQFPPP) has biased composition (pro residues). The chain crosses the membrane as a helical span at residues 150–170 (ALGFRITEVILCVISFSIMAA). At 171–191 (DKTQGWSGDSYDRYKEYRYCL) the chain is on the extracellular side. A helical membrane pass occupies residues 192-212 (AVNVIAFVYSAFEACDAACYI). The Cytoplasmic portion of the chain corresponds to 213-225 (AKESYMINCGFHD). The chain crosses the membrane as a helical span at residues 226-246 (LFVFSMDQLLAYLLMSASSCA). Topologically, residues 247–265 (ATRVDDWVSNWGKDEFTQM) are extracellular. Residues 266–286 (ATASIAVSFLAFGAFAVSALI) form a helical membrane-spanning segment. The Cytoplasmic segment spans residues 287–297 (SSYRLFTHASS).

It belongs to the Casparian strip membrane proteins (CASP) family. As to quaternary structure, homodimer and heterodimers.

It is found in the cell membrane. This Arabidopsis thaliana (Mouse-ear cress) protein is CASP-like protein 4A2.